Here is a 660-residue protein sequence, read N- to C-terminus: MKSSKLFALAGVTLLAATTLAACSGSGSSTKGEKTFSYIYETDPDNLNYLTTAKAATANITSNVVDGLLENDRYGNFVPSMAEDWSVSKDGLTYTYTIRKDAKWYTSEGEEYAAVKAQDFVTGLKYAADKKSDALYLVQESIKGLDAYVKGEIKDFSQVGIKALDEQTVQYTLNKPESFWNSKTTMGVLAPVNEEFLNSKGDDFAKATDPSSLLYNGPYLLKSIVTKSSVEFAKNPNYWDKDNVHVDKVKLSFWDGQDTSKPAENFKDGSLTAARLYPTSASFAELEKSMKDNIVYTQQDSITYLVGTNIDRQSYKYTSKTSDEQKASTKKALLNKDFRQAIAFGFDRTAYASQLNGQTGASKILRNLFVPPTFVQADGKNFGDMVKEKLVTYGDEWKDVNLADSQDGLYNPEKAKAEFAKAKSALQAEGVQFPIHLDMPVDQTATTKVQRVQSMKQSLEATLGADNVIIDIQQLQKDEVNNITYFAENAAGEDWDLSDNVGWGPDFADPSTYLDIIKPSVGESTKTYLGFDSGEDNVAAKKVGLYDYEKLVTEAGDETTDVAKRYDKYAAAQAWLTDSALIIPTTSRTGRPILSKMVPFTIPFALSGNKGTSEPVLYKYLELQDKAVTVDEYQKAQEKWMKEKEESNKKAQEDLAKHVK.

A signal peptide spans 1–22 (MKSSKLFALAGVTLLAATTLAA). The N-palmitoyl cysteine moiety is linked to residue cysteine 23. Cysteine 23 is lipidated: S-diacylglycerol cysteine. Residues 638 to 660 (EKWMKEKEESNKKAQEDLAKHVK) are disordered.

Belongs to the bacterial solute-binding protein 5 family.

Its subcellular location is the cell membrane. Part of the binding-protein-dependent transport system for oligopeptides; probably an oligopeptide binding protein. This Streptococcus pneumoniae serotype 4 (strain ATCC BAA-334 / TIGR4) protein is Oligopeptide-binding protein AliA (aliA).